Here is a 188-residue protein sequence, read N- to C-terminus: Der GTPase-activating protein YihI (188 aa).

Disordered stretches follow at residues 1-80 (MKQP…VPVP) and 162-188 (DEDDVEREEKQEDILQLLKRGNPKDTF). Positions 27–37 (TRDELDAEARD) are enriched in basic and acidic residues. Positions 47-57 (NRSGARTNVEG) are enriched in polar residues.

The protein belongs to the YihI family. In terms of assembly, interacts with Der.

Functionally, a GTPase-activating protein (GAP) that modifies Der/EngA GTPase function. May play a role in ribosome biogenesis. The chain is Der GTPase-activating protein YihI from Yersinia pseudotuberculosis serotype O:3 (strain YPIII).